The following is a 138-amino-acid chain: Trypsin inhibitor DE5 alpha chain (138 aa).

A disulfide bridge connects residues C40 and C86.

This sequence belongs to the protease inhibitor I3 (leguminous Kunitz-type inhibitor) family. Heterodimer of an alpha and a beta chain linked by a disulfide bond.

In terms of biological role, inhibition of trypsin. This is Trypsin inhibitor DE5 alpha chain from Adenanthera pavonina (Sandal bead tree).